A 77-amino-acid polypeptide reads, in one-letter code: Apelin (77 aa).

The N-terminal stretch at 1 to 22 (MNLSFCVQALLLLWLSLTAVCG) is a signal peptide. A propeptide spanning residues 23-41 (VPLMLPPDGKGLEEGNMRY) is cleaved from the precursor. A disordered region spans residues 45–77 (PRTSRTGPGAWQGGRRKFRRQRPRLSHKGPMPF). Positions 58–71 (GRRKFRRQRPRLSH) are enriched in basic residues.

The protein belongs to the apelin family. Several active peptides may be produced by proteolytic processing of the peptide precursor. In terms of tissue distribution, expressed in the lung, testis, ovary, uterus and mammary gland. Expressed in neurons in the thalamic paraventricular and hypothalamic supraoptic nuclei. The lung, testis and uterus mainly contain a large form that looks like apelin-36, whereas the mammary gland seems to contain 2 forms of apelin, a large form close to apelin-36 and a small form close to apelin-13 (at protein level). Widely expressed in the adult, with highest levels in the mammary gland of lactating animals, very high levels in the lung, intermediate levels in the spinal cord, ovary, adipose tissue, brain (neuronal cell bodies and fibers in the supraoptic and the paraventricular nuclei), heart and testis, and lowest levels in the pituitary gland, kidney, stomach, uterus and pancreas.

It localises to the secreted. The protein localises to the extracellular space. Functionally, peptide hormone that functions as endogenous ligand for the G-protein-coupled apelin receptor (APLNR/APJ), that plays a role in cadiovascular homeostasis. Functions as a balanced agonist activating both G(i) protein pathway and beta-arrestin pathway of APLNR. Downstream G proteins activation, apelin can inhibit cAMP production and activate key intracellular effectors such as ERKs. On the other hand, APLNR activation induces beta-arrestin recruitment to the membrane leading to desensitization and internalization of the receptor. Apelin blunts cardiac hypertrophic induction from APLNR on response to pathological stimuli, but also induces myocardial hypertrophy under normal conditions. Apelin-36 dissociates more hardly than (pyroglu)apelin-13 from APLNR. Involved in the regulation of cardiac precursor cell movements during gastrulation and heart morphogenesis. Has an inhibitory effect on cytokine production in response to T-cell receptor/CD3 cross-linking; the oral intake of apelin in the colostrum and the milk might therefore modulate immune responses in neonates. Plays a role in early coronary blood vessels formation. Mediates myocardial contractility in an ERK1/2-dependent manner. May also have a role in the central control of body fluid homeostasis by influencing vasopressin release and drinking behavior. This is Apelin from Rattus norvegicus (Rat).